Here is a 432-residue protein sequence, read N- to C-terminus: Adenylosuccinate synthetase (432 aa).

GTP contacts are provided by residues 13–19 (GDEGKGK) and 41–43 (GHT). Asp-14 serves as the catalytic Proton acceptor. Mg(2+)-binding residues include Asp-14 and Gly-41. Residues 14–17 (DEGK), 39–42 (NAGH), Thr-130, Arg-144, Gln-225, Thr-240, and Arg-304 each bind IMP. Catalysis depends on His-42, which acts as the Proton donor. Position 300 to 306 (300 to 306 (AVTGRPR)) interacts with substrate. GTP contacts are provided by residues Arg-306, 332 to 334 (KLD), and 415 to 417 (STG).

This sequence belongs to the adenylosuccinate synthetase family. Homodimer. Mg(2+) serves as cofactor.

It is found in the cytoplasm. The enzyme catalyses IMP + L-aspartate + GTP = N(6)-(1,2-dicarboxyethyl)-AMP + GDP + phosphate + 2 H(+). It functions in the pathway purine metabolism; AMP biosynthesis via de novo pathway; AMP from IMP: step 1/2. In terms of biological role, plays an important role in the de novo pathway of purine nucleotide biosynthesis. Catalyzes the first committed step in the biosynthesis of AMP from IMP. The protein is Adenylosuccinate synthetase of Histophilus somni (strain 2336) (Haemophilus somnus).